A 222-amino-acid chain; its full sequence is 3-dehydroquinate dehydratase (222 aa).

3-dehydroquinate is bound by residues 32–34 (ELR) and arginine 64. The active-site Proton donor/acceptor is the histidine 117. Lysine 143 serves as the catalytic Schiff-base intermediate with substrate. Arginine 181 provides a ligand contact to 3-dehydroquinate.

The protein belongs to the type-I 3-dehydroquinase family. In terms of assembly, homodimer.

It catalyses the reaction 3-dehydroquinate = 3-dehydroshikimate + H2O. It participates in metabolic intermediate biosynthesis; chorismate biosynthesis; chorismate from D-erythrose 4-phosphate and phosphoenolpyruvate: step 3/7. Functionally, involved in the third step of the chorismate pathway, which leads to the biosynthesis of aromatic amino acids. Catalyzes the cis-dehydration of 3-dehydroquinate (DHQ) and introduces the first double bond of the aromatic ring to yield 3-dehydroshikimate. The chain is 3-dehydroquinate dehydratase from Aeropyrum pernix (strain ATCC 700893 / DSM 11879 / JCM 9820 / NBRC 100138 / K1).